Here is a 307-residue protein sequence, read N- to C-terminus: tRNA(Met) cytidine acetate ligase (307 aa).

Residues 12–25 (VVEY…HIYQ), Gly106, Asn163, and Arg188 each bind ATP.

The protein belongs to the TmcAL family.

The protein localises to the cytoplasm. It carries out the reaction cytidine(34) in elongator tRNA(Met) + acetate + ATP = N(4)-acetylcytidine(34) in elongator tRNA(Met) + AMP + diphosphate. Functionally, catalyzes the formation of N(4)-acetylcytidine (ac(4)C) at the wobble position of elongator tRNA(Met), using acetate and ATP as substrates. First activates an acetate ion to form acetyladenylate (Ac-AMP) and then transfers the acetyl group to tRNA to form ac(4)C34. In Mycoplasmopsis synoviae (strain 53) (Mycoplasma synoviae), this protein is tRNA(Met) cytidine acetate ligase.